A 109-amino-acid polypeptide reads, in one-letter code: Large ribosomal subunit protein uL24 (109 aa).

Belongs to the universal ribosomal protein uL24 family. As to quaternary structure, part of the 50S ribosomal subunit.

In terms of biological role, one of two assembly initiator proteins, it binds directly to the 5'-end of the 23S rRNA, where it nucleates assembly of the 50S subunit. Functionally, one of the proteins that surrounds the polypeptide exit tunnel on the outside of the subunit. The sequence is that of Large ribosomal subunit protein uL24 from Rickettsia rickettsii (strain Iowa).